A 347-amino-acid chain; its full sequence is UDP-N-acetylenolpyruvoylglucosamine reductase (347 aa).

Residues 16–187 (AIEQCSHYLV…IAVGLKLPKT (172 aa)) form the FAD-binding PCMH-type domain. Residue Arg-163 is part of the active site. Ser-233 acts as the Proton donor in catalysis. Residue Glu-328 is part of the active site.

The protein belongs to the MurB family. Requires FAD as cofactor.

It localises to the cytoplasm. The catalysed reaction is UDP-N-acetyl-alpha-D-muramate + NADP(+) = UDP-N-acetyl-3-O-(1-carboxyvinyl)-alpha-D-glucosamine + NADPH + H(+). It functions in the pathway cell wall biogenesis; peptidoglycan biosynthesis. In terms of biological role, cell wall formation. The chain is UDP-N-acetylenolpyruvoylglucosamine reductase from Vibrio vulnificus (strain YJ016).